The sequence spans 157 residues: Transcription elongation factor GreA (157 aa).

Residues 1-60 (MEKVPMTSAGFAALGEELKKRQSEDRPRIIEHIAEARSHGDLSENAEYHAAKEEQSHNEG) form a disordered region. Residues 16 to 60 (EELKKRQSEDRPRIIEHIAEARSHGDLSENAEYHAAKEEQSHNEG) are compositionally biased toward basic and acidic residues. Residues 46 to 73 (AEYHAAKEEQSHNEGRIAELEDKLARAD) adopt a coiled-coil conformation.

This sequence belongs to the GreA/GreB family.

Functionally, necessary for efficient RNA polymerase transcription elongation past template-encoded arresting sites. The arresting sites in DNA have the property of trapping a certain fraction of elongating RNA polymerases that pass through, resulting in locked ternary complexes. Cleavage of the nascent transcript by cleavage factors such as GreA or GreB allows the resumption of elongation from the new 3'terminus. GreA releases sequences of 2 to 3 nucleotides. This is Transcription elongation factor GreA from Bradyrhizobium diazoefficiens (strain JCM 10833 / BCRC 13528 / IAM 13628 / NBRC 14792 / USDA 110).